The chain runs to 263 residues: 3-deoxy-manno-octulosonate cytidylyltransferase (263 aa).

This sequence belongs to the KdsB family.

It localises to the cytoplasm. It catalyses the reaction 3-deoxy-alpha-D-manno-oct-2-ulosonate + CTP = CMP-3-deoxy-beta-D-manno-octulosonate + diphosphate. It participates in nucleotide-sugar biosynthesis; CMP-3-deoxy-D-manno-octulosonate biosynthesis; CMP-3-deoxy-D-manno-octulosonate from 3-deoxy-D-manno-octulosonate and CTP: step 1/1. The protein operates within bacterial outer membrane biogenesis; lipopolysaccharide biosynthesis. Functionally, activates KDO (a required 8-carbon sugar) for incorporation into bacterial lipopolysaccharide in Gram-negative bacteria. This is 3-deoxy-manno-octulosonate cytidylyltransferase from Burkholderia cenocepacia (strain ATCC BAA-245 / DSM 16553 / LMG 16656 / NCTC 13227 / J2315 / CF5610) (Burkholderia cepacia (strain J2315)).